A 282-amino-acid polypeptide reads, in one-letter code: Pantothenate synthetase (282 aa).

30–37 (MGYLHEGH) provides a ligand contact to ATP. His37 functions as the Proton donor in the catalytic mechanism. Gln61 provides a ligand contact to (R)-pantoate. A beta-alanine-binding site is contributed by Gln61. 147-150 (GMKD) serves as a coordination point for ATP. Gln153 is a (R)-pantoate binding site. ATP is bound by residues Val176 and 184–187 (KSSR).

This sequence belongs to the pantothenate synthetase family. In terms of assembly, homodimer.

The protein localises to the cytoplasm. The catalysed reaction is (R)-pantoate + beta-alanine + ATP = (R)-pantothenate + AMP + diphosphate + H(+). The protein operates within cofactor biosynthesis; (R)-pantothenate biosynthesis; (R)-pantothenate from (R)-pantoate and beta-alanine: step 1/1. Functionally, catalyzes the condensation of pantoate with beta-alanine in an ATP-dependent reaction via a pantoyl-adenylate intermediate. The chain is Pantothenate synthetase from Bacillus cereus (strain G9842).